Here is a 613-residue protein sequence, read N- to C-terminus: Thioredoxin reductase 1, cytoplasmic (613 aa).

The segment at 58 to 121 is disordered; the sequence is AVLPASRPSK…LPTMNGSKDP (64 aa). Over residues 65 to 74 the composition is skewed to polar residues; the sequence is PSKTLPSSSQ. FAD is bound by residues 136 to 137, 156 to 157, 172 to 173, and 177 to 181; these read SG, DF, TC, and GCIPK. The cysteines at positions 173 and 178 are disulfide-linked. Position 182 is an N6-succinyllysine (Lys182). Position 245 is a phosphotyrosine (Tyr245). FAD is bound by residues 245–246 and Thr275; that span reads YG. NADP(+) is bound by residues Arg280, 312 to 318, 335 to 336, Arg340, 340 to 342, 406 to 407, and Lys429; these read ASYVALE, RS, RGF, and GR. Tyr314 is an FAD binding site. FAD-binding positions include Asp448, 455 to 457, and His586; that span reads ELT. Glu455 is a binding site for NADP(+). His586 functions as the Proton acceptor in the catalytic mechanism. Positions 611-612 form a cross-link, cysteinyl-selenocysteine (Cys-Sec); sequence CU. A non-standard amino acid (selenocysteine) is located at residue Sec612.

This sequence belongs to the class-I pyridine nucleotide-disulfide oxidoreductase family. Homodimer. Requires FAD as cofactor. In terms of processing, ISGylated.

Its subcellular location is the cytoplasm. It carries out the reaction [thioredoxin]-dithiol + NADP(+) = [thioredoxin]-disulfide + NADPH + H(+). The catalysed reaction is H2O2 + NADPH + H(+) = NADP(+) + 2 H2O. Reduces disulfideprotein thioredoxin (Trx) to its dithiol-containing form. Homodimeric flavoprotein involved in the regulation of cellular redox reactions, growth and differentiation. Contains a selenocysteine residue at the C-terminal active site that is essential for catalysis. Also has reductase activity on hydrogen peroxide (H2O2). This Mus musculus (Mouse) protein is Thioredoxin reductase 1, cytoplasmic.